A 1526-amino-acid chain; its full sequence is uncharacterized protein (1526 aa).

WD repeat units lie at residues 334–376, 862–901, 904–945, 946–985, 988–1027, 1030–1069, 1072–1111, 1114–1153, 1156–1195, 1198–1237, 1240–1279, 1282–1321, 1324–1363, 1366–1405, 1408–1447, and 1450–1491; these read CTKE…EHIS, KILGSVLTVAFSPDGKLFATGDSGGIVRFWEAATGKELLT, GHNS…KTFK, GHTSRVRSVVFSPNSLMLASGSSDQTVRLWDISSGECLYI, GHTGWVYSVAFNLDGSMLATGSGDQTVRLWDISSSQCFYI, GHTSCVRSVVFSSDGAMLASGSDDQTVRLWDISSGNCLYT, GHTSCVRSVVFSPDGAMLASGGDDQIVRLWDISSGNCLYT, GYTSWVRFLVFSPNGVTLANGSSDQIVRLWDISSKKCLYT, GHTNWVNAVAFSPDGATLASGSGDQTVRLWDISSSKCLYI, GHTSWVNSVVFNPDGSTLASGSSDQTVRLWEINSSKCLCT, GHTSWVNSVVFNPDGSMLASGSSDKTVRLWDISSSKCLHT, GHTNWVNSVAFNPDGSMLASGSGDQTVRLWEISSSKCLHT, GHTSWVSSVTFSPDGTMLASGSDDQTVRLWSISSGECLYT, GHTNWVGSVIFSPDGAILASGSGDQTVRLWSISSGKCLYT, GHNNWVGSIVFSPDGTLLASGSDDQTVRLWNISSGECLYT, and GHIN…KTLK. One can recognise a Pentapeptide repeat domain in the interval 823–862; that stretch reads MVLEGRDLSHTVIIGADFTNTSLRCVNFTEANLAYSVFTK.

This is an uncharacterized protein from Nostoc sp. (strain PCC 7120 / SAG 25.82 / UTEX 2576).